Consider the following 502-residue polypeptide: Alpha-globin transcription factor CP2 (502 aa).

One can recognise a Grh/CP2 DB domain in the interval 63-300 (EILPFQYVLC…SPGFNSSHSS (238 aa)). A DNA-binding region spans residues 133-386 (EHQQLEGWRW…LFNALKGRMV (254 aa)). Over residues 241–265 (KGADRKQKIDREKMEKRTPHEKEKY) the composition is skewed to basic and acidic residues. 2 disordered regions span residues 241–268 (KGADRKQKIDREKMEKRTPHEKEKYQPS) and 294–326 (FNSSHSSFSLGEGNGSPNHQPEPPPPVTDNLLP). Residue Ser353 is modified to Phosphoserine.

This sequence belongs to the grh/CP2 family. CP2 subfamily. As to quaternary structure, binds to DNA as a dimer. Interacts with UBP1 and PIAS1, and is probably part of a complex containing TFCP2, UBP1 and PIAS1. Component of the SSP (stage selector protein) complex, which appears to be a heteromer of TFCP2 and 2 copies of NFE4.

Its subcellular location is the nucleus. Binds a variety of cellular promoters including fibrinogen, alpha-globin promoters. Activation of the alpha-globin promoter in erythroid cells is via synergistic interaction with UBP1. Functions as part of the SSP (stage selector protein) complex. Facilitates the interaction of the gamma-globin genes with enhancer elements contained in the locus control region in fetal erythroid cells. Interacts by binding to the stage selector element (SSE) in the proximal gamma-globin promoter. The chain is Alpha-globin transcription factor CP2 (Tfcp2) from Mus musculus (Mouse).